The chain runs to 394 residues: Guanine nucleotide-binding protein G(s) subunit alpha (394 aa).

A disordered region spans residues 1–23 (MGCLGNSKTEDQRNEEKAQREAN). Residue Gly2 is the site of N-palmitoyl glycine attachment. The S-palmitoyl cysteine moiety is linked to residue Cys3. A compositionally biased stretch (basic and acidic residues) spans 8-23 (KTEDQRNEEKAQREAN). The region spanning 39 to 394 (ATHRLLLLGA…RMHLRQYELL (356 aa)) is the G-alpha domain. Residues 42–55 (RLLLLGAGESGKST) form a G1 motif region. 47 to 55 (GAGESGKST) contributes to the GTP binding site. Ser54 serves as a coordination point for Mg(2+). The disordered stretch occupies residues 68–91 (FNGEGGEEDPQAARSNSDGEKATK). Positions 196–204 (DLLRCRVLT) are G2 motif. GTP-binding positions include 197-204 (LLRCRVLT), 223-227 (DVGGQ), 292-295 (NKQD), and Ala366. Position 204 (Thr204) interacts with Mg(2+). The G3 motif stretch occupies residues 219–228 (FHMFDVGGQR). The tract at residues 288–295 (ILFLNKQD) is G4 motif. A G5 motif region spans residues 364-369 (TCAVDT).

This sequence belongs to the G-alpha family. G(s) subfamily. As to quaternary structure, heterotrimeric G proteins are composed of 3 units; alpha, beta and gamma. The alpha chain contains the guanine nucleotide binding site. Interacts with CRY1; the interaction may block GPCR-mediated regulation of cAMP concentrations. Interacts with ADCY6 and stimulates its adenylyl cyclase activity. Interacts with ADCY2 and ADCY5. Stimulates the ADCY5 adenylyl cyclase activity. Interaction with SASH1.

It localises to the cell membrane. In terms of biological role, guanine nucleotide-binding proteins (G proteins) function as transducers in numerous signaling pathways controlled by G protein-coupled receptors (GPCRs). Signaling involves the activation of adenylyl cyclases, resulting in increased levels of the signaling molecule cAMP. GNAS functions downstream of several GPCRs, including beta-adrenergic receptors. Stimulates the Ras signaling pathway via RAPGEF2. The sequence is that of Guanine nucleotide-binding protein G(s) subunit alpha (GNAS) from Canis lupus familiaris (Dog).